The sequence spans 883 residues: Alanine--tRNA ligase (883 aa).

Zn(2+)-binding residues include His563, His567, Cys673, and His677.

It belongs to the class-II aminoacyl-tRNA synthetase family. It depends on Zn(2+) as a cofactor.

Its subcellular location is the cytoplasm. It carries out the reaction tRNA(Ala) + L-alanine + ATP = L-alanyl-tRNA(Ala) + AMP + diphosphate. Its function is as follows. Catalyzes the attachment of alanine to tRNA(Ala) in a two-step reaction: alanine is first activated by ATP to form Ala-AMP and then transferred to the acceptor end of tRNA(Ala). Also edits incorrectly charged Ser-tRNA(Ala) and Gly-tRNA(Ala) via its editing domain. This is Alanine--tRNA ligase from Caulobacter sp. (strain K31).